Consider the following 436-residue polypeptide: Methylenetetrahydrofolate--tRNA-(uracil-5-)-methyltransferase TrmFO (436 aa).

Residue Gly10–Gly15 participates in FAD binding.

Belongs to the MnmG family. TrmFO subfamily. FAD serves as cofactor.

The protein localises to the cytoplasm. The enzyme catalyses uridine(54) in tRNA + (6R)-5,10-methylene-5,6,7,8-tetrahydrofolate + NADH + H(+) = 5-methyluridine(54) in tRNA + (6S)-5,6,7,8-tetrahydrofolate + NAD(+). It catalyses the reaction uridine(54) in tRNA + (6R)-5,10-methylene-5,6,7,8-tetrahydrofolate + NADPH + H(+) = 5-methyluridine(54) in tRNA + (6S)-5,6,7,8-tetrahydrofolate + NADP(+). Functionally, catalyzes the folate-dependent formation of 5-methyl-uridine at position 54 (M-5-U54) in all tRNAs. The chain is Methylenetetrahydrofolate--tRNA-(uracil-5-)-methyltransferase TrmFO from Exiguobacterium sp. (strain ATCC BAA-1283 / AT1b).